Reading from the N-terminus, the 442-residue chain is D-serine dehydratase (442 aa).

Residue K118 is modified to N6-(pyridoxal phosphate)lysine.

It belongs to the serine/threonine dehydratase family. DsdA subfamily. As to quaternary structure, monomer. The cofactor is pyridoxal 5'-phosphate.

It catalyses the reaction D-serine = pyruvate + NH4(+). This chain is D-serine dehydratase, found in Escherichia fergusonii (strain ATCC 35469 / DSM 13698 / CCUG 18766 / IAM 14443 / JCM 21226 / LMG 7866 / NBRC 102419 / NCTC 12128 / CDC 0568-73).